The sequence spans 85 residues: Phosphocarrier protein HPr (85 aa).

Residues 1 to 85 (MFQKEIKINA…HLSKIMTELE (85 aa)) form the HPr domain. His-15 serves as the catalytic Pros-phosphohistidine intermediate.

Belongs to the HPr family.

The protein localises to the cytoplasm. Its function is as follows. General (non sugar-specific) component of the phosphoenolpyruvate-dependent sugar phosphotransferase system (sugar PTS). This major carbohydrate active-transport system catalyzes the phosphorylation of incoming sugar substrates concomitantly with their translocation across the cell membrane. The phosphoryl group from phosphoenolpyruvate (PEP) is transferred to the phosphoryl carrier protein HPr by enzyme I. Phospho-HPr then transfers it to the PTS EIIA domain. This Buchnera aphidicola subsp. Schizaphis graminum (strain Sg) protein is Phosphocarrier protein HPr (ptsH).